The primary structure comprises 728 residues: Catalase-peroxidase (728 aa).

A cross-link (tryptophyl-tyrosyl-methioninium (Trp-Tyr) (with M-244)) is located at residues 91 to 218 (WHSAGTYRTA…LAAVQMGLIY (128 aa)). Residue His92 is the Proton acceptor of the active site. The tryptophyl-tyrosyl-methioninium (Tyr-Met) (with W-91) cross-link spans 218-244 (YVNPEGPDGNPDPVAAARDIRDTFARM). His259 provides a ligand contact to heme b.

Belongs to the peroxidase family. Peroxidase/catalase subfamily. As to quaternary structure, homodimer or homotetramer. The cofactor is heme b. Formation of the three residue Trp-Tyr-Met cross-link is important for the catalase, but not the peroxidase activity of the enzyme.

It catalyses the reaction H2O2 + AH2 = A + 2 H2O. It carries out the reaction 2 H2O2 = O2 + 2 H2O. Bifunctional enzyme with both catalase and broad-spectrum peroxidase activity. The sequence is that of Catalase-peroxidase from Burkholderia pseudomallei (strain 1710b).